Reading from the N-terminus, the 658-residue chain is UvrABC system protein B (658 aa).

The 389-residue stretch at 26 to 414 folds into the Helicase ATP-binding domain; sequence AGLKKGLKHQ…PDVIEQIIRP (389 aa). 39–46 provides a ligand contact to ATP; sequence GATGTGKT. A Beta-hairpin motif is present at residues 92–115; sequence YYDYYQPEAYVPQSDTYIEKDASI. Positions 430–592 constitute a Helicase C-terminal domain; that stretch reads QIDDLMDEIN…ITPKTIRKEI (163 aa). Residues 622–658 form the UVR domain; sequence DIFIEGMEHEMKEAAKALDFERAAELRDALLEIKAEG.

The protein belongs to the UvrB family. As to quaternary structure, forms a heterotetramer with UvrA during the search for lesions. Interacts with UvrC in an incision complex.

The protein localises to the cytoplasm. The UvrABC repair system catalyzes the recognition and processing of DNA lesions. A damage recognition complex composed of 2 UvrA and 2 UvrB subunits scans DNA for abnormalities. Upon binding of the UvrA(2)B(2) complex to a putative damaged site, the DNA wraps around one UvrB monomer. DNA wrap is dependent on ATP binding by UvrB and probably causes local melting of the DNA helix, facilitating insertion of UvrB beta-hairpin between the DNA strands. Then UvrB probes one DNA strand for the presence of a lesion. If a lesion is found the UvrA subunits dissociate and the UvrB-DNA preincision complex is formed. This complex is subsequently bound by UvrC and the second UvrB is released. If no lesion is found, the DNA wraps around the other UvrB subunit that will check the other stand for damage. This is UvrABC system protein B from Listeria innocua serovar 6a (strain ATCC BAA-680 / CLIP 11262).